A 492-amino-acid polypeptide reads, in one-letter code: Probable beta-1,4-xylosyltransferase IRX14H (492 aa).

Residues 1–33 (MKLSVFRLSYWNRRGSSFRSSPSLDPSFDGKSP) lie on the Cytoplasmic side of the membrane. Residues 34–54 (SSVFWFVIHGLCCLISLILGF) form a helical; Signal-anchor for type II membrane protein membrane-spanning segment. Residues 55–492 (RFSHLVLFFL…FDGVKVSATS (438 aa)) are Lumenal-facing. N-linked (GlcNAc...) asparagine glycosylation is found at N99, N196, and N314. The interval 457–492 (IKEAKSNSKPRVSKSKSYKEKQEPKAFDGVKVSATS) is disordered. Positions 473 to 484 (SYKEKQEPKAFD) are enriched in basic and acidic residues.

This sequence belongs to the glycosyltransferase 43 family. Expressed in developing interfascicular fibers and xylem cells in stems and developing secondary xylem in roots.

Its subcellular location is the golgi apparatus membrane. Involved in the synthesis of the hemicellulose glucuronoxylan, a major component of secondary cell walls. Probably involved in the elongation of glucuronoxylan xylosyl backbone. The protein is Probable beta-1,4-xylosyltransferase IRX14H (IRX14H) of Arabidopsis thaliana (Mouse-ear cress).